A 169-amino-acid polypeptide reads, in one-letter code: Phosphopantetheine adenylyltransferase (169 aa).

Ser10 is a binding site for substrate. ATP-binding positions include 10-11 (SF) and His18. Residues Lys42, Leu74, and Arg88 each contribute to the substrate site. Residues 89 to 91 (GLR), Glu99, and 124 to 130 (YAFLSSS) each bind ATP.

It belongs to the bacterial CoaD family. As to quaternary structure, homohexamer. The cofactor is Mg(2+).

Its subcellular location is the cytoplasm. It catalyses the reaction (R)-4'-phosphopantetheine + ATP + H(+) = 3'-dephospho-CoA + diphosphate. The protein operates within cofactor biosynthesis; coenzyme A biosynthesis; CoA from (R)-pantothenate: step 4/5. Reversibly transfers an adenylyl group from ATP to 4'-phosphopantetheine, yielding dephospho-CoA (dPCoA) and pyrophosphate. The protein is Phosphopantetheine adenylyltransferase of Geobacillus sp. (strain WCH70).